The following is a 562-amino-acid chain: Formate--tetrahydrofolate ligase (562 aa).

An ATP-binding site is contributed by 71-78; the sequence is TPAGEGKS.

The protein belongs to the formate--tetrahydrofolate ligase family.

It carries out the reaction (6S)-5,6,7,8-tetrahydrofolate + formate + ATP = (6R)-10-formyltetrahydrofolate + ADP + phosphate. Its pathway is one-carbon metabolism; tetrahydrofolate interconversion. The protein is Formate--tetrahydrofolate ligase of Bacillus cereus (strain ATCC 10987 / NRS 248).